The chain runs to 298 residues: GTPase Era (298 aa).

The Era-type G domain occupies 8–176 (RSGSVAVIGR…VSDLLKLVPE (169 aa)). Residues 16–23 (GRPNVGKS) are G1. 16–23 (GRPNVGKS) is a binding site for GTP. Residues 42 to 46 (QTTRH) form a G2 region. Residues 63–66 (DTPG) form a G3 region. Residues 63 to 67 (DTPGL) and 125 to 128 (NKVD) each bind GTP. Residues 125–128 (NKVD) are G4. Positions 155 to 157 (VSA) are G5. Residues 199-283 (VREQLMRQLG…FLETWVRVRE (85 aa)) enclose the KH type-2 domain.

This sequence belongs to the TRAFAC class TrmE-Era-EngA-EngB-Septin-like GTPase superfamily. Era GTPase family. Monomer.

It localises to the cytoplasm. The protein resides in the cell inner membrane. An essential GTPase that binds both GDP and GTP, with rapid nucleotide exchange. Plays a role in 16S rRNA processing and 30S ribosomal subunit biogenesis and possibly also in cell cycle regulation and energy metabolism. The chain is GTPase Era from Xanthomonas campestris pv. campestris (strain 8004).